A 444-amino-acid polypeptide reads, in one-letter code: Phosphoglucosamine mutase (444 aa).

Residue Ser102 is the Phosphoserine intermediate of the active site. Positions 102, 241, 243, and 245 each coordinate Mg(2+). A Phosphoserine modification is found at Ser102.

Belongs to the phosphohexose mutase family. Mg(2+) is required as a cofactor. Activated by phosphorylation.

The catalysed reaction is alpha-D-glucosamine 1-phosphate = D-glucosamine 6-phosphate. Its function is as follows. Catalyzes the conversion of glucosamine-6-phosphate to glucosamine-1-phosphate. This Haemophilus ducreyi (strain 35000HP / ATCC 700724) protein is Phosphoglucosamine mutase.